The following is a 312-amino-acid chain: Uracil-DNA glycosylase (312 aa).

A compositionally biased stretch (basic and acidic residues) spans methionine 1–alanine 11. The tract at residues methionine 1–leucine 61 is disordered. The segment covering glutamate 22–serine 33 has biased composition (polar residues). Aspartate 155 serves as the catalytic Proton acceptor.

This sequence belongs to the uracil-DNA glycosylase (UDG) superfamily. UNG family.

It is found in the host nucleus. It carries out the reaction Hydrolyzes single-stranded DNA or mismatched double-stranded DNA and polynucleotides, releasing free uracil.. Excises uracil residues from the DNA which can arise as a result of misincorporation of dUMP residues by DNA polymerase or deamination of cytosines. Therefore may reduce deleterious uracil incorporation into the viral genome, particularly in terminally differentiated cells which lack DNA repair enzymes. The polypeptide is Uracil-DNA glycosylase (61) (Equine herpesvirus 1 (strain V592) (EHV-1)).